The sequence spans 544 residues: Putative pentatricopeptide repeat-containing protein At5g59200, chloroplastic (544 aa).

The disordered stretch occupies residues methionine 1–serine 21. Residues methionine 1–arginine 25 constitute a chloroplast transit peptide. PPR repeat units lie at residues aspartate 60–proline 90, asparagine 91–proline 125, asparagine 127–serine 156, serine 157–arginine 187, aspartate 188–lysine 218, aspartate 219–alanine 253, asparagine 254–leucine 288, serine 289–lysine 319, aspartate 320–proline 354, asparagine 355–valine 385, and glutamine 391–glutamate 421. The segment at methionine 426–aspartate 501 is type E motif. The tract at residues asparagine 502 to arginine 532 is type E(+) motif.

The protein belongs to the PPR family. PCMP-E subfamily.

It localises to the plastid. The protein resides in the chloroplast. Involved in RNA editing event in chloroplasts. Required for the editing of a single site in rpl23 transcript. The sequence is that of Putative pentatricopeptide repeat-containing protein At5g59200, chloroplastic (PCMP-E41) from Arabidopsis thaliana (Mouse-ear cress).